Here is a 20-residue protein sequence, read N- to C-terminus: Equinatoxin-1'' (20 aa).

The segment at 3–12 (AVAGAVIEGA) is plays an important role in the hemolytic activity. The segment at 11–20 (GATLTFNVLQ) is N-terminal region.

The protein belongs to the actinoporin family. Sea anemone subfamily. As to quaternary structure, octamer or nonamer in membranes. Monomer in the soluble state.

Its subcellular location is the secreted. The protein localises to the nematocyst. The protein resides in the target cell membrane. Pore-forming protein that forms cations-selective hydrophilic pores of around 1 nm and causes cardiac stimulation and cytolysis. Pore formation is a multi-step process that involves specific recognition of membrane sphingomyelin (but neither cholesterol nor phosphatidylcholine) using aromatic rich region and adjacent phosphocholine (POC) binding site, firm binding to the membrane (mainly driven by hydrophobic interactions) accompanied by the transfer of the N-terminal region to the lipid-water interface and finally pore formation after oligomerization of monomers. Cytolytic effects include red blood cells hemolysis, platelet aggregation and lysis, cytotoxic and cytostatic effects on fibroblasts. Lethality in mammals has been ascribed to severe vasospasm of coronary vessels, cardiac arrhythmia, and inotropic effects. The polypeptide is Equinatoxin-1'' (Actinia equina (Beadlet anemone)).